Here is a 328-residue protein sequence, read N- to C-terminus: MIEKIWSGESPLWRLLLPLSWLYGLVSGAIRLCYKLKLKRAWRAPVPVVVVGNLTAGGNGKTPVVVWLVEQLQQRGIRVGVVSRGYGGKAESYPLLLSADTTTAQAGDEPVLIYQRTDAPVAVSPVRSDAVKAILAQHPDVQIIVTDDGLQHYRLARDVEIVVIDGVRRFGNGWWLPAGPMRERAGRLKSVDAVIVNGGVPRSGEIPMHLLPGQAVNLRTGTRCDVAQLEHVVAMAGIGHPPRFFATLKMCGVQPEKCVPLADHQSLNHADVSALVSTGQTLVMTEKDAVKCRAFAEENWWYLPVDAQLSGDEPAKLLTQLTSLASGN.

Residue 55–62 coordinates ATP; that stretch reads TAGGNGKT.

The protein belongs to the LpxK family.

It carries out the reaction a lipid A disaccharide + ATP = a lipid IVA + ADP + H(+). Its pathway is glycolipid biosynthesis; lipid IV(A) biosynthesis; lipid IV(A) from (3R)-3-hydroxytetradecanoyl-[acyl-carrier-protein] and UDP-N-acetyl-alpha-D-glucosamine: step 6/6. Its function is as follows. Transfers the gamma-phosphate of ATP to the 4'-position of a tetraacyldisaccharide 1-phosphate intermediate (termed DS-1-P) to form tetraacyldisaccharide 1,4'-bis-phosphate (lipid IVA). The chain is Tetraacyldisaccharide 4'-kinase from Escherichia coli O139:H28 (strain E24377A / ETEC).